Reading from the N-terminus, the 117-residue chain is Large ribosomal subunit protein bL19 (117 aa).

The protein belongs to the bacterial ribosomal protein bL19 family.

Functionally, this protein is located at the 30S-50S ribosomal subunit interface and may play a role in the structure and function of the aminoacyl-tRNA binding site. The polypeptide is Large ribosomal subunit protein bL19 (Vibrio vulnificus (strain CMCP6)).